A 795-amino-acid polypeptide reads, in one-letter code: Serine/threonine-protein kinase MARK1 (795 aa).

A disordered region spans residues 1–41 (MSARTPLPTVNERDTENHTSVDGYTETHIPPAKSSSRQNLP). Position 5 is a phosphothreonine (T5). In terms of domain architecture, Protein kinase spans 60-311 (YRLQKTIGKG…LEQIMKDRWM (252 aa)). ATP is bound by residues 66–74 (IGKGNFAKV) and K89. D182 functions as the Proton acceptor in the catalytic mechanism. Residue T208 is modified to Phosphothreonine. T215 is subject to Phosphothreonine; by LKB1 and TAOK1. S219 carries the phosphoserine; by GSK3-beta modification. In terms of domain architecture, UBA spans 329–370 (DLSDAKRIDIMVTMGFARDEINDALVSQKYDEVMATYILLGR). Disordered stretches follow at residues 377–498 (GGES…SGGS) and 518–699 (QNGR…KPRS). Phosphoserine is present on residues S382, S390, S393, S403, S423, and S444. Positions 387–403 (CQRSRPSSDLNNSTLQS) are enriched in polar residues. The segment covering 447–459 (SEQKEEWGKDTAR) has biased composition (basic and acidic residues). Polar residues predominate over residues 462 to 473 (GSTTVGSKSEVT). At S475 the chain carries Phosphoserine. The span at 486 to 495 (TASPSNNVYS) shows a compositional bias: polar residues. Composition is skewed to low complexity over residues 523 to 547 (SSLTEMSASSMSSAGSTVASAGPSA) and 585 to 599 (PAASPSAHSISASTP). Residue S588 is modified to Phosphoserine. Position 613 is a phosphothreonine; by PKC/PRKCZ (T613). Polar residues predominate over residues 647–657 (GTSTGIISKIT). Composition is skewed to basic and acidic residues over residues 661–676 (VRRDPSEGEASGRADT) and 683–697 (DPKERDKDEGKEAKP). Phosphoserine is present on S666. One can recognise a KA1 domain in the interval 746 to 795 (DARQDSLVQWEMEVCKLPRLSLNGVRFKRISGTSIAFKNIASKIANELKL).

It belongs to the protein kinase superfamily. CAMK Ser/Thr protein kinase family. SNF1 subfamily. As to quaternary structure, interacts with MAPT/TAU. Mg(2+) serves as cofactor. Phosphorylated at Thr-215 by STK11/LKB1 in complex with STE20-related adapter-alpha (STRADA) pseudo kinase and CAB39. Phosphorylation at Thr-215 by TAOK1 activates the kinase activity, leading to phosphorylation and detachment of MAPT/TAU from microtubules. Phosphorylation at Ser-219 by GSK3-beta (GSK3B) inhibits the kinase activity. Phosphorylation at Thr-613 by PRKCZ/aPKC in polarized epithelial cells inhibits the kinase activity.

The protein resides in the cell membrane. It localises to the cytoplasm. It is found in the cytoskeleton. Its subcellular location is the cell projection. The protein localises to the dendrite. It carries out the reaction L-seryl-[protein] + ATP = O-phospho-L-seryl-[protein] + ADP + H(+). It catalyses the reaction L-threonyl-[protein] + ATP = O-phospho-L-threonyl-[protein] + ADP + H(+). The catalysed reaction is L-seryl-[tau protein] + ATP = O-phospho-L-seryl-[tau protein] + ADP + H(+). The enzyme catalyses L-threonyl-[tau protein] + ATP = O-phospho-L-threonyl-[tau protein] + ADP + H(+). Its activity is regulated as follows. Inhibited by phosphorylation at Ser-219. Activated by phosphorylation on Thr-215. In terms of biological role, serine/threonine-protein kinase. Involved in cell polarity and microtubule dynamics regulation. Phosphorylates DCX, MAP2 and MAP4. Phosphorylates the microtubule-associated protein MAPT/TAU. Involved in cell polarity by phosphorylating the microtubule-associated proteins MAP2, MAP4 and MAPT/TAU at KXGS motifs, causing detachment from microtubules, and their disassembly. Involved in the regulation of neuronal migration through its dual activities in regulating cellular polarity and microtubule dynamics, possibly by phosphorylating and regulating DCX. Also acts as a positive regulator of the Wnt signaling pathway, probably by mediating phosphorylation of dishevelled proteins (DVL1, DVL2 and/or DVL3). In Mus musculus (Mouse), this protein is Serine/threonine-protein kinase MARK1.